A 156-amino-acid polypeptide reads, in one-letter code: Small ribosomal subunit protein uS7 (156 aa).

The protein belongs to the universal ribosomal protein uS7 family. As to quaternary structure, part of the 30S ribosomal subunit. Contacts proteins S9 and S11.

Functionally, one of the primary rRNA binding proteins, it binds directly to 16S rRNA where it nucleates assembly of the head domain of the 30S subunit. Is located at the subunit interface close to the decoding center, probably blocks exit of the E-site tRNA. The polypeptide is Small ribosomal subunit protein uS7 (Phytoplasma australiense).